Consider the following 86-residue polypeptide: Small ribosomal subunit protein bS16 (86 aa).

This sequence belongs to the bacterial ribosomal protein bS16 family.

The protein is Small ribosomal subunit protein bS16 of Nostoc punctiforme (strain ATCC 29133 / PCC 73102).